We begin with the raw amino-acid sequence, 269 residues long: Regulatory protein RecX (269 aa).

This sequence belongs to the RecX family.

It localises to the cytoplasm. Its function is as follows. Modulates RecA activity. This Listeria monocytogenes serotype 4b (strain CLIP80459) protein is Regulatory protein RecX.